Here is a 341-residue protein sequence, read N- to C-terminus: tRNA N6-adenosine threonylcarbamoyltransferase (341 aa).

Fe cation-binding residues include H111 and H115. Substrate is bound by residues 134–138 (LVSGG), D167, G180, and N276. Position 304 (D304) interacts with Fe cation.

This sequence belongs to the KAE1 / TsaD family. It depends on Fe(2+) as a cofactor.

Its subcellular location is the cytoplasm. The enzyme catalyses L-threonylcarbamoyladenylate + adenosine(37) in tRNA = N(6)-L-threonylcarbamoyladenosine(37) in tRNA + AMP + H(+). Its function is as follows. Required for the formation of a threonylcarbamoyl group on adenosine at position 37 (t(6)A37) in tRNAs that read codons beginning with adenine. Is involved in the transfer of the threonylcarbamoyl moiety of threonylcarbamoyl-AMP (TC-AMP) to the N6 group of A37, together with TsaE and TsaB. TsaD likely plays a direct catalytic role in this reaction. The protein is tRNA N6-adenosine threonylcarbamoyltransferase of Azotobacter vinelandii (strain DJ / ATCC BAA-1303).